Consider the following 118-residue polypeptide: uncharacterized protein (118 aa).

This is an uncharacterized protein from Rickettsia prowazekii (strain Madrid E).